Consider the following 239-residue polypeptide: Bradykinin-potentiating and C-type natriuretic peptides (239 aa).

A signal peptide spans 1–23; sequence MFVSRLAASGLLLLALLAVSLDG. Propeptides lie at residues 24 to 33 and 43 to 49; these read KPVQQWSHKG and LVVQQWS. Gln-50 is subject to Pyrrolidone carboxylic acid. The propeptide occupies 62–64; that stretch reads VVV. At Gln-65 the chain carries Pyrrolidone carboxylic acid. A propeptide spanning residues 76 to 82 is cleaved from the precursor; it reads LVVQQWS. A Pyrrolidone carboxylic acid modification is found at Gln-83. Positions 95-97 are excised as a propeptide; that stretch reads LVV. The residue at position 98 (Gln-98) is a Pyrrolidone carboxylic acid. Propeptides lie at residues 109–136 and 148–217; these read LLKP…AALD and GSKA…LAKK. The tract at residues 132-205 is disordered; it reads EAALDTPPAG…HHAVGGGGGG (74 aa). The span at 161–171 shows a compositional bias: low complexity; sequence SKGASATSAAS. Over residues 173–183 the composition is skewed to basic and acidic residues; that stretch reads PMRDLRTDGKQ. A disulfide bridge links Cys-223 with Cys-239.

In the N-terminal section; belongs to the bradykinin-potentiating peptide family. This sequence in the central section; belongs to the bradykinin inhibitor peptide family. It in the C-terminal section; belongs to the natriuretic peptide family. As to expression, expressed by the venom gland.

The protein localises to the secreted. Functionally, bradykinin-potentiating peptides both inhibit the activity of the angiotensin-converting enzyme (ACE) and enhances the action of bradykinin by inhibiting the peptidases that inactivate it. They act as indirect hypotensive agent. In terms of biological role, inhibits angiotensin-converting enzyme (ACE) activity (IC(50)=4.25 uM), preventing the release of angiotensin and thus indirectly contributing to hypotension. In vivo, induce hypotensive response in both normotensive and hypertensive rats. Antagonizes the vasodilatory actions of bradykinin at the B2 bradykinin receptor (BDKRB2). Its function is as follows. has a vasorelaxant activity in rat aortic strips and a diuretic potency in anesthetized rats. May act by activating natriuretic receptors (NPR1 and/or NPR2). This is Bradykinin-potentiating and C-type natriuretic peptides from Lachesis muta muta (Bushmaster).